We begin with the raw amino-acid sequence, 442 residues long: Aspartate--tRNA(Asp/Asn) ligase (442 aa).

An L-aspartate-binding site is contributed by glutamate 172. An aspartate region spans residues 194-197 (QFYK). Residue arginine 216 participates in L-aspartate binding. ATP contacts are provided by residues 216–218 (RAE), 224–226 (RHL), and glutamate 365. Mg(2+) is bound by residues glutamate 365 and threonine 368. L-aspartate is bound by residues threonine 368 and arginine 372. 413–416 (GLER) contributes to the ATP binding site.

The protein belongs to the class-II aminoacyl-tRNA synthetase family. Type 2 subfamily. In terms of assembly, homodimer. Requires Mg(2+) as cofactor.

The protein localises to the cytoplasm. It catalyses the reaction tRNA(Asx) + L-aspartate + ATP = L-aspartyl-tRNA(Asx) + AMP + diphosphate. Functionally, aspartyl-tRNA synthetase with relaxed tRNA specificity since it is able to aspartylate not only its cognate tRNA(Asp) but also tRNA(Asn). Reaction proceeds in two steps: L-aspartate is first activated by ATP to form Asp-AMP and then transferred to the acceptor end of tRNA(Asp/Asn). In Aeropyrum pernix (strain ATCC 700893 / DSM 11879 / JCM 9820 / NBRC 100138 / K1), this protein is Aspartate--tRNA(Asp/Asn) ligase (aspS).